A 496-amino-acid chain; its full sequence is Solute carrier family 2, facilitated glucose transporter member 3 (496 aa).

At 1 to 11 (MADKKKITASL) the chain is on the cytoplasmic side. A helical membrane pass occupies residues 12–33 (IYAVSVAAIGSLQFGYNTGVIN). Residues 34–65 (APEKIIQAFYNRTLSQRSGETISPELLTSLWS) are Extracellular-facing. N-linked (GlcNAc...) asparagine glycosylation occurs at Asn44. The helical transmembrane segment at 66–86 (LSVAIFSVGGMIGSFSVSLFF) threads the bilayer. Over 87–91 (NRFGR) the chain is Cytoplasmic. A helical membrane pass occupies residues 92 to 112 (RNSMLLVNVLAFAGGALMALS). Residues 113 to 119 (KIAKAVE) are Extracellular-facing. Residues 120–143 (MLIIGRFIIGLFCGLCTGFVPMYI) traverse the membrane as a helical segment. The Cytoplasmic portion of the chain corresponds to 144–154 (SEVSPTSLRGA). A helical transmembrane segment spans residues 155-175 (FGTLNQLGIVVGILVAQIFGL). Gln160 is a binding site for D-glucose. At 176–184 (EGIMGTEAL) the chain is on the extracellular side. The chain crosses the membrane as a helical span at residues 185 to 205 (WPLLLGFTIVPAVLQCVALLF). At 206–270 (CPESPRFLLI…LFRSPNYRQP (65 aa)) the chain is on the cytoplasmic side. Residues 271–291 (IIISITLQLSQQLSGINAVFY) traverse the membrane as a helical segment. The important for selectivity against fructose stretch occupies residues 278-280 (QLS). Residues 281 to 282 (QQ) and Asn287 contribute to the D-glucose site. Residues 292 to 305 (YSTGIFERAGITQP) are Extracellular-facing. Residues 306-326 (VYATIGAGVVNTVFTVVSLFL) traverse the membrane as a helical segment. Asn316 serves as a coordination point for D-glucose. At 327–332 (VERAGR) the chain is on the cytoplasmic side. A helical transmembrane segment spans residues 333–353 (RTLHLVGLGGMAVCAAVMTIA). Residues 354–362 (LALKEKWIR) are Extracellular-facing. The chain crosses the membrane as a helical span at residues 363 to 388 (YISIVATFGFVALFEIGPGPIPWFIV). Glu377 and Trp385 together coordinate D-glucose. The Cytoplasmic segment spans residues 389–398 (AELFSQGPRP). Residues 399–419 (AAMAVAGCSNWTSNFLVGMLF) traverse the membrane as a helical segment. Residues 420-428 (PYAEKLCGP) lie on the Extracellular side of the membrane. Residues 429-449 (YVFLIFLVFLLIFFIFTYFKV) traverse the membrane as a helical segment. Topologically, residues 450–496 (PETKGRTFEDISRGFEEQVETSSPSSPPIEKNPMVEMNSIEPDKEVA) are cytoplasmic. The interval 464 to 496 (FEEQVETSSPSSPPIEKNPMVEMNSIEPDKEVA) is disordered.

It belongs to the major facilitator superfamily. Sugar transporter (TC 2.A.1.1) family. Glucose transporter subfamily.

It is found in the cell membrane. The protein localises to the perikaryon. The protein resides in the cell projection. It carries out the reaction D-glucose(out) = D-glucose(in). The enzyme catalyses D-galactose(in) = D-galactose(out). With respect to regulation, deoxyglucose transport is inhibited by D-glucose, D-galactose and maltose. Galactose transport is inhibited by D-glucose and maltose. Facilitative glucose transporter. Can also mediate the uptake of various other monosaccharides across the cell membrane. Mediates the uptake of glucose, 2-deoxyglucose, galactose, mannose, xylose and fucose, and probably also dehydroascorbate. Does not mediate fructose transport. Required for mesendoderm differentiation. The chain is Solute carrier family 2, facilitated glucose transporter member 3 from Gallus gallus (Chicken).